Reading from the N-terminus, the 152-residue chain is Dynein light chain Tctex-type protein 2B (152 aa).

Belongs to the dynein light chain Tctex-type family. In terms of assembly, light chain of the cytoplasmic dynein complex 2, a multisubunit complex composed at least of eleven different proteins. The cytoplasmic dynein 2 complex consists of two catalytic heavy chains (HCs) and a number of non-catalytic subunits presented by intermediate chains (ICs), light intermediate chains (LICs) and light chains (LCs). Among them, a heavy chain (DYNC2H1), two intermediate chains (DYNC2I2 and DYNC2I1), a light intermediate chain (DYNC2LI1), and a light chain (DYNLT2B) are unique to the dynein-2 complex, but a subset of the light chains are also shared by dynein-1 and dynein-2 complexes. The dimer DYNLT2B-DYNLT1/DYNLT3 interacts with DYNC2I1; this interaction is crucial for retrograde trafficking of ciliary proteins.

The protein resides in the dynein axonemal particle. In terms of biological role, acts as one of several non-catalytic accessory components of the cytoplasmic dynein 2 complex (dynein-2 complex), a motor protein complex that drives the movement of cargos along microtubules within cilia and flagella in concert with the intraflagellar transport (IFT) system. Required for proper retrograde ciliary transport. This is Dynein light chain Tctex-type protein 2B (DYNLT2B) from Bos taurus (Bovine).